Reading from the N-terminus, the 131-residue chain is Holo-[acyl-carrier-protein] synthase (131 aa).

Asp-8 and Glu-57 together coordinate Mg(2+).

It belongs to the P-Pant transferase superfamily. AcpS family. Requires Mg(2+) as cofactor.

Its subcellular location is the cytoplasm. It carries out the reaction apo-[ACP] + CoA = holo-[ACP] + adenosine 3',5'-bisphosphate + H(+). In terms of biological role, transfers the 4'-phosphopantetheine moiety from coenzyme A to a Ser of acyl-carrier-protein. This chain is Holo-[acyl-carrier-protein] synthase, found in Desulforudis audaxviator (strain MP104C).